Reading from the N-terminus, the 93-residue chain is Small ribosomal subunit protein uS17 (93 aa).

It belongs to the universal ribosomal protein uS17 family. As to quaternary structure, part of the 30S ribosomal subunit.

Its function is as follows. One of the primary rRNA binding proteins, it binds specifically to the 5'-end of 16S ribosomal RNA. The sequence is that of Small ribosomal subunit protein uS17 from Rhodococcus jostii (strain RHA1).